Here is a 92-residue protein sequence, read N- to C-terminus: Small ribosomal subunit protein uS19 (92 aa).

This sequence belongs to the universal ribosomal protein uS19 family.

Functionally, protein S19 forms a complex with S13 that binds strongly to the 16S ribosomal RNA. The sequence is that of Small ribosomal subunit protein uS19 from Borrelia hermsii (strain HS1 / DAH).